Consider the following 189-residue polypeptide: NADH-quinone oxidoreductase subunit B (189 aa).

4 residues coordinate [4Fe-4S] cluster: Cys-39, Cys-40, Cys-104, and Cys-135.

The protein belongs to the complex I 20 kDa subunit family. In terms of assembly, NDH-1 is composed of 14 different subunits. Subunits NuoB, C, D, E, F, and G constitute the peripheral sector of the complex. Requires [4Fe-4S] cluster as cofactor.

The protein localises to the cell inner membrane. The enzyme catalyses a quinone + NADH + 5 H(+)(in) = a quinol + NAD(+) + 4 H(+)(out). NDH-1 shuttles electrons from NADH, via FMN and iron-sulfur (Fe-S) centers, to quinones in the respiratory chain. The immediate electron acceptor for the enzyme in this species is believed to be a menaquinone. Couples the redox reaction to proton translocation (for every two electrons transferred, four hydrogen ions are translocated across the cytoplasmic membrane), and thus conserves the redox energy in a proton gradient. The protein is NADH-quinone oxidoreductase subunit B of Chlorobium phaeovibrioides (strain DSM 265 / 1930) (Prosthecochloris vibrioformis (strain DSM 265)).